We begin with the raw amino-acid sequence, 345 residues long: Phosphoribosylformylglycinamidine cyclo-ligase (345 aa).

The protein belongs to the AIR synthase family.

The protein resides in the cytoplasm. It carries out the reaction 2-formamido-N(1)-(5-O-phospho-beta-D-ribosyl)acetamidine + ATP = 5-amino-1-(5-phospho-beta-D-ribosyl)imidazole + ADP + phosphate + H(+). It functions in the pathway purine metabolism; IMP biosynthesis via de novo pathway; 5-amino-1-(5-phospho-D-ribosyl)imidazole from N(2)-formyl-N(1)-(5-phospho-D-ribosyl)glycinamide: step 2/2. This chain is Phosphoribosylformylglycinamidine cyclo-ligase, found in Escherichia coli O139:H28 (strain E24377A / ETEC).